A 260-amino-acid chain; its full sequence is 3beta-hydroxysteroid dehydrogenase 2 (260 aa).

NAD(+) is bound by residues Asp-43, 69–70 (DV), Asn-96, Tyr-163, and Lys-167. The active-site Proton acceptor is the Tyr-163.

This sequence belongs to the short-chain dehydrogenases/reductases (SDR) family.

The enzyme catalyses 3-oxo-5beta-cholan-24-oate + NADH + H(+) = isolithocholate + NAD(+). It catalyses the reaction 12alpha-hydroxy-3-oxo-5beta-cholan-24-oate + NADH + H(+) = isodeoxycholate + NAD(+). The catalysed reaction is 12alpha-hydroxy-3-oxo-5beta-cholan-24-oate + NADPH + H(+) = isodeoxycholate + NADP(+). It carries out the reaction 7alpha,12alpha-dihydroxy-3-oxo-5beta-cholan-24-oate + NADH + H(+) = isocholate + NAD(+). The enzyme catalyses 3-oxochenodeoxycholate + NADH + H(+) = isochenodeoxycholate + NAD(+). Involved in the modification of secondary bile acids into iso-bile acids (3beta-bile acids) via epimerization of the 3-OH group through a 3-oxo-intermediate. Catalyzes the reduction of 12-alpha-hydroxy-3-oxo-5-beta-cholan-24-oate (3-oxo-DCA) and 3-oxo-5-beta-cholan-24-oate (3-oxo-LCA) to yield isodeoxycholate (isoDCA) and isolithocholate (isoLCA), respectively. Is also able to catalyze the reduction of 3-dehydrocholate (3-oxo-CA or 7alpha,12alpha-dihydroxy-3-oxo-5beta-cholan-24-oate) and 7-alpha-hydroxy-3-oxo-5-beta-cholan-24-oate (3-oxo-CDCA), into isocholate (isoCA) and isochenodeoxycholate (isoCDCA), respectively. Accepts both NADH and NADPH as cosubstrates. The conversion of the abundant bile acid deoxycholate (DCA) into isoDCA by the gut bacterium E.lenta favors the growth of the keystone commensal genus Bacteroides, since isoDCA is less cytotoxic than its parent compound, DCA; iso-bile acids have thus a potential role in modulating gut community composition. This Eggerthella lenta (strain ATCC 25559 / DSM 2243 / CCUG 17323 / JCM 9979 / KCTC 3265 / NCTC 11813 / VPI 0255 / 1899 B) (Eubacterium lentum) protein is 3beta-hydroxysteroid dehydrogenase 2.